Reading from the N-terminus, the 274-residue chain is Putative pyruvate, phosphate dikinase regulatory protein 1 (274 aa).

An ADP-binding site is contributed by 149–156; it reads GISRTSKT.

Belongs to the pyruvate, phosphate/water dikinase regulatory protein family. PDRP subfamily.

The catalysed reaction is N(tele)-phospho-L-histidyl/L-threonyl-[pyruvate, phosphate dikinase] + ADP = N(tele)-phospho-L-histidyl/O-phospho-L-threonyl-[pyruvate, phosphate dikinase] + AMP + H(+). It carries out the reaction N(tele)-phospho-L-histidyl/O-phospho-L-threonyl-[pyruvate, phosphate dikinase] + phosphate + H(+) = N(tele)-phospho-L-histidyl/L-threonyl-[pyruvate, phosphate dikinase] + diphosphate. Its function is as follows. Bifunctional serine/threonine kinase and phosphorylase involved in the regulation of the pyruvate, phosphate dikinase (PPDK) by catalyzing its phosphorylation/dephosphorylation. This Listeria monocytogenes serotype 4b (strain F2365) protein is Putative pyruvate, phosphate dikinase regulatory protein 1.